The sequence spans 338 residues: Cytosolic sulfotransferase 16 (338 aa).

81-86 (KTGTTW) contacts 3'-phosphoadenylyl sulfate. The active-site Proton acceptor is histidine 143. 3'-phosphoadenylyl sulfate-binding positions include arginine 165, serine 173, tyrosine 231, and 301-303 (RKG).

Belongs to the sulfotransferase 1 family. As to expression, highly expressed in roots, stems and mature leaves. Low expression in young leaves and flowers. Barely detected in siliques.

The protein localises to the cytoplasm. It catalyses the reaction (Z)-desulfoglucotropeolin + 3'-phosphoadenylyl sulfate = (Z)-glucotropeolin + adenosine 3',5'-bisphosphate + H(+). The enzyme catalyses (Z)-indolylmethyl desulfoglucosinolate + 3'-phosphoadenylyl sulfate = (Z)-glucobrassicin + adenosine 3',5'-bisphosphate + H(+). Inhibited by phosphoadenosine 5'-phosphate (PAP). Sulfotransferase that utilizes 3'-phospho-5'-adenylyl sulfate (PAPS) as sulfonate donor to catalyze the sulfate conjugation of desulfo-glucosinolates (dsGSs), the final step in the biosynthesis of the glucosinolate core structure. Substrate preference is desulfo-2-phenylethyl glucosinolate &gt; desulfo-indol-3-yl methyl glucosinolate &gt; desulfo-benzyl glucosinolate &gt; desulfo-6-methylthiohexyl glucosinolate &gt; desulfo-4-methylthiobutyl glucosinolate &gt; desulfo-3-methylthiopropyl glucosinolate &gt; desulfo-singrin &gt; desulfo-3-butenyl glucosinolate. The chain is Cytosolic sulfotransferase 16 (SOT16) from Arabidopsis thaliana (Mouse-ear cress).